Reading from the N-terminus, the 343-residue chain is Tetraacyldisaccharide 4'-kinase (343 aa).

47-54 (SVGGTGKT) contributes to the ATP binding site.

This sequence belongs to the LpxK family.

It carries out the reaction a lipid A disaccharide + ATP = a lipid IVA + ADP + H(+). It participates in glycolipid biosynthesis; lipid IV(A) biosynthesis; lipid IV(A) from (3R)-3-hydroxytetradecanoyl-[acyl-carrier-protein] and UDP-N-acetyl-alpha-D-glucosamine: step 6/6. Functionally, transfers the gamma-phosphate of ATP to the 4'-position of a tetraacyldisaccharide 1-phosphate intermediate (termed DS-1-P) to form tetraacyldisaccharide 1,4'-bis-phosphate (lipid IVA). This Flavobacterium psychrophilum (strain ATCC 49511 / DSM 21280 / CIP 103535 / JIP02/86) protein is Tetraacyldisaccharide 4'-kinase.